Reading from the N-terminus, the 547-residue chain is MAAKDVVFGGEARARMVEGVNILANAVKVTLGPKGRNVVLERSFGAPTVTKDGVSVAKEIELKDKLQNMGAQLVKEVASKTNDIAGDGTTTATVLAQAIVREGAKYVAAGLNPMDLKRGIDKAVAALVEELKKQSKATTTSKEIAQVGSISANSDESVGSIIAEAMDKVGKEGVITVEEGKSLANELDVVEGMQFDRGYLSPYFINNPEKQVALLDNPFVLLFDKKISNIRDLLPTLEAVAKAGRPLLIIAEDVEGEALATLVVNTIRGILKVVAVKAPGFGDRRKAMLEDIAILTGGKVIAEEVGLALDKVTLEDLGQAVRIEIGKENTTIIDGAGQAAEIEARVKQIRIQIEEATSDYDREKLQERVAKLAGGVAVIKVGAATEVEMKEKKARVEDALHATRAAVEEGIVAGGGVALLRAKQAVGDLKTGDAEQDAGIKLIMKAIEAPLREIVANAGGEPSVVVNAVLNGSGNYGFNAANDTYGDMLEMGILDPTKVTRTALQNAASVASLLLTTEAMIAESPKAEGGPAMPDMGGMGGMGGMGM.

ATP is bound by residues 30–33 (TLGP), K51, 87–91 (DGTTT), G415, 479–481 (NAA), and D495.

This sequence belongs to the chaperonin (HSP60) family. As to quaternary structure, forms a cylinder of 14 subunits composed of two heptameric rings stacked back-to-back. Interacts with the co-chaperonin GroES.

It localises to the cytoplasm. The enzyme catalyses ATP + H2O + a folded polypeptide = ADP + phosphate + an unfolded polypeptide.. Its function is as follows. Together with its co-chaperonin GroES, plays an essential role in assisting protein folding. The GroEL-GroES system forms a nano-cage that allows encapsulation of the non-native substrate proteins and provides a physical environment optimized to promote and accelerate protein folding. This chain is Chaperonin GroEL, found in Delftia acidovorans (strain DSM 14801 / SPH-1).